We begin with the raw amino-acid sequence, 347 residues long: Heat-inducible transcription repressor HrcA (347 aa).

It belongs to the HrcA family.

Its function is as follows. Negative regulator of class I heat shock genes (grpE-dnaK-dnaJ and groELS operons). Prevents heat-shock induction of these operons. The chain is Heat-inducible transcription repressor HrcA from Sorangium cellulosum (strain So ce56) (Polyangium cellulosum (strain So ce56)).